A 164-amino-acid polypeptide reads, in one-letter code: uncharacterized protein (164 aa).

The N-terminal stretch at Met1–Ala25 is a signal peptide.

This is an uncharacterized protein from Escherichia coli (strain K12).